We begin with the raw amino-acid sequence, 380 residues long: Alkanesulfonate monooxygenase (380 aa).

The protein belongs to the SsuD family. As to quaternary structure, homotetramer.

The catalysed reaction is an alkanesulfonate + FMNH2 + O2 = an aldehyde + FMN + sulfite + H2O + 2 H(+). In terms of biological role, catalyzes the desulfonation of aliphatic sulfonates. This chain is Alkanesulfonate monooxygenase, found in Pectobacterium atrosepticum (strain SCRI 1043 / ATCC BAA-672) (Erwinia carotovora subsp. atroseptica).